Consider the following 102-residue polypeptide: Glutaredoxin-C13 (102 aa).

Residues 1 to 101 (MDKVMRMSSE…PLIKPYQSIL (101 aa)) form the Glutaredoxin domain. Cysteine 21 and cysteine 24 form a disulfide bridge.

It belongs to the glutaredoxin family. CC-type subfamily.

Its subcellular location is the cytoplasm. Functionally, has a glutathione-disulfide oxidoreductase activity in the presence of NADPH and glutathione reductase. Reduces low molecular weight disulfides and proteins. This chain is Glutaredoxin-C13 (GRXC13), found in Arabidopsis thaliana (Mouse-ear cress).